A 270-amino-acid chain; its full sequence is 4-hydroxy-tetrahydrodipicolinate reductase (270 aa).

NAD(+) is bound by residues 9 to 14 (GAGGRM) and Glu35. Residue Arg36 participates in NADP(+) binding. Residues 99–101 (GTT) and 123–126 (ASNF) contribute to the NAD(+) site. The Proton donor/acceptor role is filled by His156. His157 lines the (S)-2,3,4,5-tetrahydrodipicolinate pocket. The Proton donor role is filled by Lys160. A (S)-2,3,4,5-tetrahydrodipicolinate-binding site is contributed by 166–167 (GT).

The protein belongs to the DapB family.

It localises to the cytoplasm. It catalyses the reaction (S)-2,3,4,5-tetrahydrodipicolinate + NAD(+) + H2O = (2S,4S)-4-hydroxy-2,3,4,5-tetrahydrodipicolinate + NADH + H(+). The enzyme catalyses (S)-2,3,4,5-tetrahydrodipicolinate + NADP(+) + H2O = (2S,4S)-4-hydroxy-2,3,4,5-tetrahydrodipicolinate + NADPH + H(+). The protein operates within amino-acid biosynthesis; L-lysine biosynthesis via DAP pathway; (S)-tetrahydrodipicolinate from L-aspartate: step 4/4. Its function is as follows. Catalyzes the conversion of 4-hydroxy-tetrahydrodipicolinate (HTPA) to tetrahydrodipicolinate. The polypeptide is 4-hydroxy-tetrahydrodipicolinate reductase (Haemophilus influenzae (strain PittEE)).